A 231-amino-acid chain; its full sequence is Protein N-terminal glutamine amidohydrolase (231 aa).

Residues 1–21 form a disordered region; it reads MADDRVAGGATPPPPPPPPPL. Positions 11–21 are enriched in pro residues; it reads TPPPPPPPPPL. Catalysis depends on residues Cys33, His89, and Asp108.

Belongs to the NTAQ1 family. Monomer.

It carries out the reaction N-terminal L-glutaminyl-[protein] + H2O = N-terminal L-glutamyl-[protein] + NH4(+). Mediates the side-chain deamidation of N-terminal glutamine residues to glutamate, an important step in N-end rule pathway of protein degradation. Conversion of the resulting N-terminal glutamine to glutamate renders the protein susceptible to arginylation, polyubiquitination and degradation as specified by the N-end rule. Does not act on substrates with internal or C-terminal glutamine and does not act on non-glutamine residues in any position. The polypeptide is Protein N-terminal glutamine amidohydrolase (Oryza sativa subsp. indica (Rice)).